We begin with the raw amino-acid sequence, 479 residues long: Phosphatidylinositol 4-kinase type 2-alpha (479 aa).

N-acetylmethionine is present on Met1. Positions 1-74 are disordered; that stretch reads MDETSPLVSP…ARGAAAQGQT (74 aa). Phosphoserine occurs at positions 5, 9, 44, 47, and 51. Residues 31 to 45 show a composition bias toward low complexity; the sequence is VPGGAVRVAAAAGSG. Positions 53-66 are enriched in basic and acidic residues; sequence GHDRERQPLLDRAR. Positions 124-453 constitute a PI3K/PI4K catalytic domain; sequence CIFPERIYQG…VQMPPVIVET (330 aa). The interval 130 to 136 is G-loop; the sequence is IYQGSSG. ATP contacts are provided by residues 131–137 and Lys152; that span reads YQGSSGS. The segment at 157–159 is important for substrate binding; that stretch reads EPY. Residues 165–178 are important for interaction with membranes; the sequence is KWTKWLQKLCCPCC. Residues Cys174, Cys175, Cys177, and Cys178 are each lipidated (S-palmitoyl cysteine). 261–264 contributes to the ATP binding site; the sequence is QLFV. The important for interaction with membranes stretch occupies residues 268 to 276; sequence KDADYWLRR. Residues 305-313 form a catalytic loop region; sequence RNTDRGNDN. The interval 344–364 is activation loop; it reads AIDNGLAFPLKHPDSWRAYPF. Asp346 provides a ligand contact to ATP. The important for interaction with membranes stretch occupies residues 359-368; the sequence is WRAYPFYWAW. At Ser462 the chain carries Phosphoserine.

This sequence belongs to the PI3/PI4-kinase family. Type II PI4K subfamily. As to quaternary structure, associates with the BLOC-1 and the AP-3 complexes; the BLOC-1 complex is required for optimal binding of PI4K2A to the AP-3 complex. Interacts with BLOC1S5 and DTNBP1. Interacts with FOS; this interaction may enhance phosphatidylinositol phosphorylation activity. Interacts with ITCH. Interacts with ATG9A. Palmitoylated by ZDHHC3 and ZDHHC7 in the CCPCC motif. Palmitoylation is cholesterol-dependent, and required for TGN localization. Post-translationally, ubiquitinated by ITCH; this does not lead to proteasomal degradation. As to expression, widely expressed. Highest expression is observed in kidney, brain, heart, skeletal muscle, and placenta and lowest expression is observed in colon, thymus, and small intestine.

The protein resides in the golgi apparatus. Its subcellular location is the trans-Golgi network membrane. It localises to the membrane raft. It is found in the cell projection. The protein localises to the dendrite. The protein resides in the presynaptic cell membrane. Its subcellular location is the synapse. It localises to the synaptosome. It is found in the mitochondrion. The protein localises to the endosome. The protein resides in the endosome membrane. Its subcellular location is the cytoplasmic vesicle. It localises to the membrane. It is found in the cell membrane. The protein localises to the perikaryon. The protein resides in the neuron projection. It catalyses the reaction a 1,2-diacyl-sn-glycero-3-phospho-(1D-myo-inositol) + ATP = a 1,2-diacyl-sn-glycero-3-phospho-(1D-myo-inositol 4-phosphate) + ADP + H(+). Membrane-bound phosphatidylinositol-4 kinase (PI4-kinase) that catalyzes the phosphorylation of phosphatidylinositol (PI) to phosphatidylinositol 4-phosphate (PI4P), a lipid that plays important roles in endocytosis, Golgi function, protein sorting and membrane trafficking and is required for prolonged survival of neurons. Besides, phosphorylation of phosphatidylinositol (PI) to phosphatidylinositol 4-phosphate (PI4P) is the first committed step in the generation of phosphatidylinositol 4,5-bisphosphate (PIP2), a precursor of the second messenger inositol 1,4,5-trisphosphate (InsP3). The polypeptide is Phosphatidylinositol 4-kinase type 2-alpha (PI4K2A) (Homo sapiens (Human)).